The chain runs to 205 residues: Glycerol-3-phosphate acyltransferase (205 aa).

The next 5 helical transmembrane spans lie at isoleucine 4 to valine 24, valine 56 to leucine 76, phenylalanine 81 to glycine 101, phenylalanine 112 to leucine 132, and glycine 138 to phenylalanine 158.

It belongs to the PlsY family. As to quaternary structure, probably interacts with PlsX.

It is found in the cell inner membrane. It carries out the reaction an acyl phosphate + sn-glycerol 3-phosphate = a 1-acyl-sn-glycero-3-phosphate + phosphate. It participates in lipid metabolism; phospholipid metabolism. Catalyzes the transfer of an acyl group from acyl-phosphate (acyl-PO(4)) to glycerol-3-phosphate (G3P) to form lysophosphatidic acid (LPA). This enzyme utilizes acyl-phosphate as fatty acyl donor, but not acyl-CoA or acyl-ACP. In Citrobacter koseri (strain ATCC BAA-895 / CDC 4225-83 / SGSC4696), this protein is Glycerol-3-phosphate acyltransferase.